We begin with the raw amino-acid sequence, 843 residues long: Protein P (843 aa).

The tract at residues 1-177 (MPLSYQHFRK…FCGSPYSWEQ (177 aa)) is terminal protein domain (TP). The tract at residues 178-346 (DLQHGRLVFQ…YCLCHIVNLI (169 aa)) is spacer. Disordered regions lie at residues 220 to 269 (KSRL…HNCA) and 291 to 316 (TSKG…RSRS). The interval 347 to 690 (EDWGPCTEHG…YLNLYPVARQ (344 aa)) is polymerase/reverse transcriptase domain (RT). The 244-residue stretch at 357–600 (EHRIRTPRTP…YSLNFMGYVI (244 aa)) folds into the Reverse transcriptase domain. 3 residues coordinate Mg(2+): aspartate 429, aspartate 551, and aspartate 552.

This sequence belongs to the hepadnaviridae P protein family.

The enzyme catalyses DNA(n) + a 2'-deoxyribonucleoside 5'-triphosphate = DNA(n+1) + diphosphate. It carries out the reaction Endonucleolytic cleavage to 5'-phosphomonoester.. Its activity is regulated as follows. Activated by host HSP70 and HSP40 in vitro to be able to bind the epsilon loop of the pgRNA. Because deletion of the RNase H region renders the protein partly chaperone-independent, the chaperones may be needed indirectly to relieve occlusion of the RNA-binding site by this domain. Inhibited by several reverse-transcriptase inhibitors: Lamivudine, Adefovir and Entecavir. Multifunctional enzyme that converts the viral RNA genome into dsDNA in viral cytoplasmic capsids. This enzyme displays a DNA polymerase activity that can copy either DNA or RNA templates, and a ribonuclease H (RNase H) activity that cleaves the RNA strand of RNA-DNA heteroduplexes in a partially processive 3'- to 5'-endonucleasic mode. Neo-synthesized pregenomic RNA (pgRNA) are encapsidated together with the P protein, and reverse-transcribed inside the nucleocapsid. Initiation of reverse-transcription occurs first by binding the epsilon loop on the pgRNA genome, and is initiated by protein priming, thereby the 5'-end of (-)DNA is covalently linked to P protein. Partial (+)DNA is synthesized from the (-)DNA template and generates the relaxed circular DNA (RC-DNA) genome. After budding and infection, the RC-DNA migrates in the nucleus, and is converted into a plasmid-like covalently closed circular DNA (cccDNA). The activity of P protein does not seem to be necessary for cccDNA generation, and is presumably released from (+)DNA by host nuclear DNA repair machinery. This is Protein P from Homo sapiens (Human).